Reading from the N-terminus, the 317-residue chain is Small ribosomal subunit protein uS2 (317 aa).

A disordered region spans residues serine 277–glycine 317. The span at alanine 281–alanine 302 shows a compositional bias: low complexity.

The protein belongs to the universal ribosomal protein uS2 family. As to quaternary structure, component of the small ribosomal subunit. Mature ribosomes consist of a small (40S) and a large (60S) subunit. The 40S subunit contains about 33 different proteins and 1 molecule of RNA (18S). The 60S subunit contains about 49 different proteins and 3 molecules of RNA (28S, 5.8S and 5S). Interacts with ribosomal protein S21.

It localises to the cytoplasm. Functionally, required for the assembly and/or stability of the 40S ribosomal subunit. Required for the processing of the 20S rRNA-precursor to mature 18S rRNA in a late step of the maturation of 40S ribosomal subunits. The chain is Small ribosomal subunit protein uS2 from Urechis caupo (Innkeeper worm).